The primary structure comprises 109 residues: Hainantoxin-XVIII-5 (109 aa).

A signal peptide spans 1–18 (MKLSIIIIATSLVIAVVA). A propeptide spanning residues 19-46 (FPSKDSKAIENDKTEQRMEIVVQETARA) is cleaved from the precursor. Disulfide bonds link Cys47/Cys62, Cys55/Cys68, Cys59/Cys108, and Cys61/Cys81.

The protein belongs to the neurotoxin 25 family. F7 subfamily. Expressed by the venom gland.

The protein localises to the secreted. Functionally, putative ion channel inhibitor. The protein is Hainantoxin-XVIII-5 of Cyriopagopus hainanus (Chinese bird spider).